Consider the following 260-residue polypeptide: MVLIRVLANLLILQLSYAQRTSELVIGGDECNINEHRFLVALHDALSGRFLCGGTLIHPEWVLTAAHCNTHFIIIYLGAHNQSVEFDYEETRYPEKKYFFPCSKNYTKWDKDIMLIRLYSPVRNSKHIAPISLPSSPPSVGSVCRIMGWGAITSPNETFPDVPHCANINLFNYTVCRAAYPELPATSRTLCAGILEGGIDTCHGDSGGPLICNGQFQGIVQAGGKTCARPRKPAVYTNVFDHLDWIKSIIAGNTAVTCPP.

The signal sequence occupies residues 1–18 (MVLIRVLANLLILQLSYA). The propeptide occupies 19 to 24 (QRTSEL). The Peptidase S1 domain occupies 25–251 (VIGGDECNIN…HLDWIKSIIA (227 aa)). Disulfide bonds link C31/C165, C52/C68, C102/C258, C144/C212, C176/C191, and C202/C227. H67 functions as the Charge relay system in the catalytic mechanism. N81 and N105 each carry an N-linked (GlcNAc...) asparagine glycan. D112 serves as the catalytic Charge relay system. 2 N-linked (GlcNAc...) asparagine glycosylation sites follow: N156 and N172. S206 (charge relay system) is an active-site residue.

The protein belongs to the peptidase S1 family. Snake venom subfamily. As to quaternary structure, monomer. Expressed by the venom gland.

It localises to the secreted. Its function is as follows. Snake venom serine protease that may act in the hemostasis system of the prey. The polypeptide is Snake venom serine protease serpentokallikrein-1 (Protobothrops mucrosquamatus (Taiwan habu)).